We begin with the raw amino-acid sequence, 1043 residues long: Peroxisomal ATPase PEX1 (1043 aa).

The tract at residues 453-626 (ATPAIILDGK…SKNQIMKLNR (174 aa)) is AAA-cassette D1. ATP-binding positions include 461-468 (GKQGIGKT) and 738-745 (GYPGCGKT). The interval 733–926 (GILLYGYPGC…CYNAYLKSVH (194 aa)) is AAA-cassette D2.

This sequence belongs to the AAA ATPase family. In terms of assembly, interacts with PEX6; forming the PEX1-PEX6 AAA ATPase complex, which is composed of a heterohexamer formed by a trimer of PEX1-PEX6 dimers. The PEX1-PEX6 heterooligomers associate with the peroxisomal importomer via interaction of PEX6 with the peroxisomal membrane anchor PEX15.

The protein resides in the cytoplasm. It is found in the cytosol. It localises to the peroxisome membrane. The enzyme catalyses ATP + H2O = ADP + phosphate + H(+). Its function is as follows. Component of the PEX1-PEX6 AAA ATPase complex, a protein dislocase complex that mediates the ATP-dependent extraction of the PEX5 receptor from peroxisomal membranes, an essential step for PEX5 recycling. Specifically recognizes PEX5 monoubiquitinated at 'Cys-6', and pulls it out of the peroxisome lumen through the PEX2-PEX10-PEX12 retrotranslocation channel. Extraction by the PEX1-PEX6 AAA ATPase complex is accompanied by unfolding of the TPR repeats and release of bound cargo from PEX5. The chain is Peroxisomal ATPase PEX1 from Saccharomyces cerevisiae (strain ATCC 204508 / S288c) (Baker's yeast).